We begin with the raw amino-acid sequence, 248 residues long: 26.2 kDa heat shock protein, mitochondrial (248 aa).

The transit peptide at 1–32 (MASTVALKGRPLATLLRQLLAADAPPAATGRP) directs the protein to the mitochondrion. Residues 26 to 48 (PAATGRPVAAAPAASGKPVTAPA) are disordered. Residues 139-248 (ATAAARRGGW…RKDVFQVNVE (110 aa)) enclose the sHSP domain.

It belongs to the small heat shock protein (HSP20) family. As to quaternary structure, may form oligomeric structures.

The protein localises to the mitochondrion. The sequence is that of 26.2 kDa heat shock protein, mitochondrial (HSP26.2) from Oryza sativa subsp. japonica (Rice).